The primary structure comprises 181 residues: ATP synthase subunit delta (181 aa).

This sequence belongs to the ATPase delta chain family. F-type ATPases have 2 components, F(1) - the catalytic core - and F(0) - the membrane proton channel. F(1) has five subunits: alpha(3), beta(3), gamma(1), delta(1), epsilon(1). F(0) has three main subunits: a(1), b(2) and c(10-14). The alpha and beta chains form an alternating ring which encloses part of the gamma chain. F(1) is attached to F(0) by a central stalk formed by the gamma and epsilon chains, while a peripheral stalk is formed by the delta and b chains.

It localises to the cell membrane. Its function is as follows. F(1)F(0) ATP synthase produces ATP from ADP in the presence of a proton or sodium gradient. F-type ATPases consist of two structural domains, F(1) containing the extramembraneous catalytic core and F(0) containing the membrane proton channel, linked together by a central stalk and a peripheral stalk. During catalysis, ATP synthesis in the catalytic domain of F(1) is coupled via a rotary mechanism of the central stalk subunits to proton translocation. Functionally, this protein is part of the stalk that links CF(0) to CF(1). It either transmits conformational changes from CF(0) to CF(1) or is implicated in proton conduction. This is ATP synthase subunit delta from Bacillus velezensis (strain DSM 23117 / BGSC 10A6 / LMG 26770 / FZB42) (Bacillus amyloliquefaciens subsp. plantarum).